Here is a 118-residue protein sequence, read N- to C-terminus: Small ribosomal subunit protein uS13 (118 aa).

Residues 94-118 form a disordered region; sequence SLPLRGQRTKTNARTRKGPRKAIKK.

This sequence belongs to the universal ribosomal protein uS13 family. In terms of assembly, part of the 30S ribosomal subunit. Forms a loose heterodimer with protein S19. Forms two bridges to the 50S subunit in the 70S ribosome.

Located at the top of the head of the 30S subunit, it contacts several helices of the 16S rRNA. In the 70S ribosome it contacts the 23S rRNA (bridge B1a) and protein L5 of the 50S subunit (bridge B1b), connecting the 2 subunits; these bridges are implicated in subunit movement. Contacts the tRNAs in the A and P-sites. The polypeptide is Small ribosomal subunit protein uS13 (Pseudoalteromonas atlantica (strain T6c / ATCC BAA-1087)).